Reading from the N-terminus, the 238-residue chain is RNA-binding protein pno1 (238 aa).

Residues 162–211 form the KH domain; it reads QSRAIGRLAGKGGRTKFTIENVTKTRIVLADSKIHILGSYQNIQLARRAI.

This sequence belongs to the PNO1 family.

The protein resides in the nucleus. It localises to the nucleolus. The polypeptide is RNA-binding protein pno1 (l(1)G0004) (Drosophila pseudoobscura pseudoobscura (Fruit fly)).